A 179-amino-acid chain; its full sequence is Large ribosomal subunit protein uL5 (179 aa).

This sequence belongs to the universal ribosomal protein uL5 family. Part of the 50S ribosomal subunit; part of the 5S rRNA/L5/L18/L25 subcomplex. Contacts the 5S rRNA and the P site tRNA. Forms a bridge to the 30S subunit in the 70S ribosome.

Functionally, this is one of the proteins that bind and probably mediate the attachment of the 5S RNA into the large ribosomal subunit, where it forms part of the central protuberance. In the 70S ribosome it contacts protein S13 of the 30S subunit (bridge B1b), connecting the 2 subunits; this bridge is implicated in subunit movement. Contacts the P site tRNA; the 5S rRNA and some of its associated proteins might help stabilize positioning of ribosome-bound tRNAs. This Rickettsia peacockii (strain Rustic) protein is Large ribosomal subunit protein uL5.